The following is an 892-amino-acid chain: von Willebrand factor A domain-containing protein 7 (892 aa).

Positions 1 to 27 are cleaved as a signal peptide; sequence MLPVEVPLSQLGPPVLLLQLLLPPTSA. An N-linked (GlcNAc...) asparagine glycan is attached at Asn-54. The tract at residues 231 to 272 is disordered; sequence YFGTNPPKPPGKCSHGGRFDQSSSQPPRGGINKDSTSPSFSP. Residues 313-495 enclose the VWFA domain; that stretch reads ASSLSFVLDT…HIRDVAAVVG (183 aa).

It is found in the secreted. The polypeptide is von Willebrand factor A domain-containing protein 7 (Vwa7) (Rattus norvegicus (Rat)).